The chain runs to 394 residues: Protein-glutamate methylesterase/protein-glutamine glutaminase (394 aa).

A disordered region spans residues 1–24; the sequence is MSDGFGRPPPPAPAGHPTGAAGGD. The segment covering 15–24 has biased composition (low complexity); the sequence is GHPTGAAGGD. Residues 27-145 enclose the Response regulatory domain; that stretch reads RVMVVDDSAV…EIGGADAFKR (119 aa). 4-aspartylphosphate is present on aspartate 78. The region spanning 191-393 is the CheB-type methylesterase domain; sequence PAPAVGSVGQ…PYIRKFASRA (203 aa). Active-site residues include serine 211, histidine 238, and aspartate 335.

It belongs to the CheB family. Phosphorylated by CheA. Phosphorylation of the N-terminal regulatory domain activates the methylesterase activity.

Its subcellular location is the cytoplasm. It carries out the reaction [protein]-L-glutamate 5-O-methyl ester + H2O = L-glutamyl-[protein] + methanol + H(+). It catalyses the reaction L-glutaminyl-[protein] + H2O = L-glutamyl-[protein] + NH4(+). Involved in chemotaxis. Part of a chemotaxis signal transduction system that modulates chemotaxis in response to various stimuli. Catalyzes the demethylation of specific methylglutamate residues introduced into the chemoreceptors (methyl-accepting chemotaxis proteins or MCP) by CheR. Also mediates the irreversible deamidation of specific glutamine residues to glutamic acid. The chain is Protein-glutamate methylesterase/protein-glutamine glutaminase from Azospirillum brasilense.